The primary structure comprises 467 residues: Glutamyl-tRNA reductase (467 aa).

Substrate is bound by residues 49 to 52 (TCNR), Ser109, 114 to 116 (EQQ), and Gln120. The active-site Nucleophile is Cys50. 189–194 (GAGAMG) is a binding site for NADP(+). Positions 446-467 (GFSDTTRYGTSPAQSSSKYHAE) are disordered. The segment covering 447-467 (FSDTTRYGTSPAQSSSKYHAE) has biased composition (polar residues).

It belongs to the glutamyl-tRNA reductase family. Homodimer.

It catalyses the reaction (S)-4-amino-5-oxopentanoate + tRNA(Glu) + NADP(+) = L-glutamyl-tRNA(Glu) + NADPH + H(+). It functions in the pathway porphyrin-containing compound metabolism; protoporphyrin-IX biosynthesis; 5-aminolevulinate from L-glutamyl-tRNA(Glu): step 1/2. In terms of biological role, catalyzes the NADPH-dependent reduction of glutamyl-tRNA(Glu) to glutamate 1-semialdehyde (GSA). The polypeptide is Glutamyl-tRNA reductase (Mycobacterium leprae (strain TN)).